A 346-amino-acid polypeptide reads, in one-letter code: Transcription factor 19 (346 aa).

The region spanning 31-88 is the FHA domain; that stretch reads YRLGCRADLCDVALRPQQEPGFISEVHAELHAERRGDDWRVSLEDHSSQGTLVNNVRL. Position 78 is a phosphoserine (serine 78). 2 disordered regions span residues 136–168 and 190–289; these read PRSR…TLSP and LTFS…AAGG. Over residues 138-147 the composition is skewed to basic and acidic residues; sequence SRGEEGETRA. Residues 190–208 are compositionally biased toward polar residues; that stretch reads LTFSRSGSGPQNPPVSTTP. A compositionally biased stretch (basic and acidic residues) spans 250 to 260; it reads EPRKKLLRVEK. The PHD-type zinc-finger motif lies at 294–343; it reads AAPCCCLPQEETVAWVQCDGCDTWFHVACVGCSIQAAKEADFRCPGCRVG. The Zn(2+) site is built by cysteine 297, cysteine 299, cysteine 311, cysteine 314, histidine 319, cysteine 322, cysteine 337, and cysteine 340.

It is found in the nucleus. Its function is as follows. Potential transcription factor that may play a role in the regulation of genes involved in cell cycle G1/S transition. May bind to regulatory elements of genes, including the promoter of the transcription factor FOXO1. The polypeptide is Transcription factor 19 (TCF19) (Sus scrofa (Pig)).